Consider the following 35-residue polypeptide: Protein YbgU (35 aa).

The sequence is that of Protein YbgU from Escherichia coli (strain K12).